A 436-amino-acid polypeptide reads, in one-letter code: Trigger factor (436 aa).

Positions 163 to 248 constitute a PPIase FKBP-type domain; that stretch reads GDRVTVDFEG…VKKIEAAHLP (86 aa).

This sequence belongs to the FKBP-type PPIase family. Tig subfamily.

It is found in the cytoplasm. The enzyme catalyses [protein]-peptidylproline (omega=180) = [protein]-peptidylproline (omega=0). Involved in protein export. Acts as a chaperone by maintaining the newly synthesized protein in an open conformation. Functions as a peptidyl-prolyl cis-trans isomerase. This Paracidovorax citrulli (strain AAC00-1) (Acidovorax citrulli) protein is Trigger factor.